A 347-amino-acid polypeptide reads, in one-letter code: Quinolinate synthase (347 aa).

The iminosuccinate site is built by histidine 47 and serine 68. Cysteine 113 is a binding site for [4Fe-4S] cluster. Iminosuccinate is bound by residues tyrosine 139–asparagine 141 and serine 156. Residue cysteine 200 participates in [4Fe-4S] cluster binding. Residues histidine 226 to glutamate 228 and threonine 243 contribute to the iminosuccinate site. Cysteine 297 is a binding site for [4Fe-4S] cluster.

Belongs to the quinolinate synthase family. Type 1 subfamily. [4Fe-4S] cluster serves as cofactor.

It localises to the cytoplasm. It carries out the reaction iminosuccinate + dihydroxyacetone phosphate = quinolinate + phosphate + 2 H2O + H(+). It participates in cofactor biosynthesis; NAD(+) biosynthesis; quinolinate from iminoaspartate: step 1/1. Catalyzes the condensation of iminoaspartate with dihydroxyacetone phosphate to form quinolinate. This Escherichia coli O127:H6 (strain E2348/69 / EPEC) protein is Quinolinate synthase.